The sequence spans 405 residues: S-adenosylmethionine synthase (405 aa).

Residue His-22 coordinates ATP. A Mg(2+)-binding site is contributed by Asp-24. A K(+)-binding site is contributed by Glu-50. L-methionine contacts are provided by Glu-63 and Gln-107. The tract at residues 107 to 117 is flexible loop; that stretch reads QSPDIAQGVDR. Residues 184-186, 250-251, Asp-259, 265-266, Ala-282, and Lys-286 contribute to the ATP site; these read DGK, RF, and RK. Residue Asp-259 coordinates L-methionine. Lys-290 provides a ligand contact to L-methionine.

This sequence belongs to the AdoMet synthase family. As to quaternary structure, homotetramer; dimer of dimers. Mg(2+) serves as cofactor. K(+) is required as a cofactor.

Its subcellular location is the cytoplasm. The catalysed reaction is L-methionine + ATP + H2O = S-adenosyl-L-methionine + phosphate + diphosphate. It functions in the pathway amino-acid biosynthesis; S-adenosyl-L-methionine biosynthesis; S-adenosyl-L-methionine from L-methionine: step 1/1. Functionally, catalyzes the formation of S-adenosylmethionine (AdoMet) from methionine and ATP. The overall synthetic reaction is composed of two sequential steps, AdoMet formation and the subsequent tripolyphosphate hydrolysis which occurs prior to release of AdoMet from the enzyme. The protein is S-adenosylmethionine synthase of Roseiflexus sp. (strain RS-1).